The following is a 209-amino-acid chain: ATP phosphoribosyltransferase (209 aa).

This sequence belongs to the ATP phosphoribosyltransferase family. Short subfamily. Heteromultimer composed of HisG and HisZ subunits.

It is found in the cytoplasm. The enzyme catalyses 1-(5-phospho-beta-D-ribosyl)-ATP + diphosphate = 5-phospho-alpha-D-ribose 1-diphosphate + ATP. It participates in amino-acid biosynthesis; L-histidine biosynthesis; L-histidine from 5-phospho-alpha-D-ribose 1-diphosphate: step 1/9. In terms of biological role, catalyzes the condensation of ATP and 5-phosphoribose 1-diphosphate to form N'-(5'-phosphoribosyl)-ATP (PR-ATP). Has a crucial role in the pathway because the rate of histidine biosynthesis seems to be controlled primarily by regulation of HisG enzymatic activity. The chain is ATP phosphoribosyltransferase from Alkaliphilus metalliredigens (strain QYMF).